Consider the following 590-residue polypeptide: MHRYRTHTCGALRDSDIDQTVRLSGWCHRIRDHGGLLFIDLRDHYGLTQCVADPDSPAFKDAEKLRAEWVVRIDGRVRRRPEGTDNDDLPTGKIELFITEIEVLGPAGELPLPVFGEQEYPEDVRLRYRFLDLRREKLHQNIMTRGAIVDAMRARMKQQGFFEFQTPILTASSPEGARDFLVPSRIHPGKFYALPQAPQQYKQLLMMSGFDRYFQIAPCFRDEDPRADRLPGEFYQLDVEMSFVTQDDVFAAMEPVITGVFEDFAKGKRVTKGWPRIPYADSMRKYGTDKPDLRNPIEMQDVSEHFRGSGFKVFARMLEEERNQVWAIPGPGGGSRAFCDRMNSWAQGEGQPGLGYIMWREGGEGAGPLANNIGPERTEAIRAALGLKAGDAAFFVAGDPSKFVKFAGLARTKVGEELNLIDKDQFALAWVVDFPMYEYNEDDKKVDFSHNPFSMPQGGMDALLGQDPLTIKAFQYDITCNGFEIASGGIRNHRPEAMVKAFEIAGYGEQEVVDRFGGMYRAFQYGAPPHGGMAAGVDRIVMLLCGTNNLREISLFPMNQRAEDLLMGAPSQVTPKQLRELHIRLNLPEN.

Glutamate 175 is a binding site for L-aspartate. The aspartate stretch occupies residues 199-202; that stretch reads QQYK. 2 residues coordinate L-aspartate: arginine 221 and histidine 450. Residue 221–223 coordinates ATP; sequence RDE. Residue glutamate 484 coordinates ATP. Arginine 491 provides a ligand contact to L-aspartate. 536 to 539 serves as a coordination point for ATP; sequence GVDR.

This sequence belongs to the class-II aminoacyl-tRNA synthetase family. Type 1 subfamily. Homodimer.

The protein localises to the cytoplasm. It carries out the reaction tRNA(Asx) + L-aspartate + ATP = L-aspartyl-tRNA(Asx) + AMP + diphosphate. Functionally, aspartyl-tRNA synthetase with relaxed tRNA specificity since it is able to aspartylate not only its cognate tRNA(Asp) but also tRNA(Asn). Reaction proceeds in two steps: L-aspartate is first activated by ATP to form Asp-AMP and then transferred to the acceptor end of tRNA(Asp/Asn). This Rhodopseudomonas palustris (strain BisB5) protein is Aspartate--tRNA(Asp/Asn) ligase.